The sequence spans 299 residues: AUGMIN subunit 1 (299 aa).

S2 is subject to N-acetylserine. Coiled-coil stretches lie at residues 76–96 (RLKASEYRAQAARIREILESA) and 164–184 (RKAIQRLTYLKKILAQLEDDV).

This sequence belongs to the HAUS1 family. In terms of assembly, part of the augmin complex composed of 8 subunits. The complex acts on microtubules and interacts with gamma-tubulin in spindles and the phragmoplast. Interacts with AUG3.

It is found in the cytoplasm. The protein resides in the cytoskeleton. Its subcellular location is the spindle. It localises to the phragmoplast. Involved in microtubules reorganization during spindle and phragmoplast development. This chain is AUGMIN subunit 1, found in Arabidopsis thaliana (Mouse-ear cress).